Consider the following 246-residue polypeptide: MKYTVDTHTHTVASTHAYSTIHDYLPIARARGIKLFATTDHGPDMADAPHFWHFVNLHVLPRVVDGVGILRGIEANIKNIDGEIDFPVRYESRLDMIMAGFHEPVFPPCDQATHTQAMINAIRSGRVDMISHPGNPAFPIDIQAVVKAAAQYRVALELNNSSFSHSRPGSENNCGAIVEAARDLGAYLTFGSDSHVAFSLGNFEHCHRLVTEAHFPEDRILARSPRALLDFLESRGRAHIPEFADL.

Zn(2+)-binding residues include histidine 8, histidine 10, histidine 16, histidine 41, glutamate 74, histidine 102, histidine 132, aspartate 193, and histidine 195.

It belongs to the PHP family. The cofactor is Zn(2+).

This Aeromonas salmonicida (strain A449) protein is Probable phosphatase ASA_1316.